Consider the following 417-residue polypeptide: Gamma-glutamyl phosphate reductase (417 aa).

Belongs to the gamma-glutamyl phosphate reductase family.

The protein localises to the cytoplasm. The enzyme catalyses L-glutamate 5-semialdehyde + phosphate + NADP(+) = L-glutamyl 5-phosphate + NADPH + H(+). The protein operates within amino-acid biosynthesis; L-proline biosynthesis; L-glutamate 5-semialdehyde from L-glutamate: step 2/2. In terms of biological role, catalyzes the NADPH-dependent reduction of L-glutamate 5-phosphate into L-glutamate 5-semialdehyde and phosphate. The product spontaneously undergoes cyclization to form 1-pyrroline-5-carboxylate. The sequence is that of Gamma-glutamyl phosphate reductase from Meiothermus ruber.